The following is a 211-amino-acid chain: Peptidyl-tRNA hydrolase (211 aa).

Tyrosine 17 is a binding site for tRNA. Histidine 22 acts as the Proton acceptor in catalysis. TRNA contacts are provided by phenylalanine 79, asparagine 81, and asparagine 127.

It belongs to the PTH family. As to quaternary structure, monomer.

It is found in the cytoplasm. It catalyses the reaction an N-acyl-L-alpha-aminoacyl-tRNA + H2O = an N-acyl-L-amino acid + a tRNA + H(+). Functionally, hydrolyzes ribosome-free peptidyl-tRNAs (with 1 or more amino acids incorporated), which drop off the ribosome during protein synthesis, or as a result of ribosome stalling. Catalyzes the release of premature peptidyl moieties from peptidyl-tRNA molecules trapped in stalled 50S ribosomal subunits, and thus maintains levels of free tRNAs and 50S ribosomes. The chain is Peptidyl-tRNA hydrolase from Solidesulfovibrio magneticus (strain ATCC 700980 / DSM 13731 / RS-1) (Desulfovibrio magneticus).